We begin with the raw amino-acid sequence, 194 residues long: NADH-quinone oxidoreductase subunit B (194 aa).

The segment covering 1-11 (MGMSQNNSTLV) has biased composition (polar residues). The segment at 1-22 (MGMSQNNSTLVAPQPKGIIDPA) is disordered. [4Fe-4S] cluster contacts are provided by Cys72, Cys73, Cys138, and Cys168.

This sequence belongs to the complex I 20 kDa subunit family. In terms of assembly, NDH-1 is composed of 14 different subunits. Subunits NuoB, C, D, E, F, and G constitute the peripheral sector of the complex. Requires [4Fe-4S] cluster as cofactor.

It localises to the cell inner membrane. The enzyme catalyses a quinone + NADH + 5 H(+)(in) = a quinol + NAD(+) + 4 H(+)(out). NDH-1 shuttles electrons from NADH, via FMN and iron-sulfur (Fe-S) centers, to quinones in the respiratory chain. The immediate electron acceptor for the enzyme in this species is believed to be ubiquinone. Couples the redox reaction to proton translocation (for every two electrons transferred, four hydrogen ions are translocated across the cytoplasmic membrane), and thus conserves the redox energy in a proton gradient. This is NADH-quinone oxidoreductase subunit B from Agrobacterium fabrum (strain C58 / ATCC 33970) (Agrobacterium tumefaciens (strain C58)).